A 106-amino-acid chain; its full sequence is Ribonuclease P protein component 4 (106 aa).

The Zn(2+) site is built by Cys-62, Cys-65, Cys-88, and Cys-91.

This sequence belongs to the eukaryotic/archaeal RNase P protein component 4 family. As to quaternary structure, consists of a catalytic RNA component and at least 4-5 protein subunits. Requires Zn(2+) as cofactor.

It is found in the cytoplasm. It catalyses the reaction Endonucleolytic cleavage of RNA, removing 5'-extranucleotides from tRNA precursor.. In terms of biological role, part of ribonuclease P, a protein complex that generates mature tRNA molecules by cleaving their 5'-ends. In Methanocorpusculum labreanum (strain ATCC 43576 / DSM 4855 / Z), this protein is Ribonuclease P protein component 4.